The primary structure comprises 306 residues: Homoserine O-succinyltransferase (306 aa).

Cysteine 142 serves as the catalytic Acyl-thioester intermediate. Residues lysine 163 and serine 192 each contribute to the substrate site. The Proton acceptor role is filled by histidine 233. Residue glutamate 235 is part of the active site. Substrate is bound at residue arginine 247.

Belongs to the MetA family.

Its subcellular location is the cytoplasm. The enzyme catalyses L-homoserine + succinyl-CoA = O-succinyl-L-homoserine + CoA. Its pathway is amino-acid biosynthesis; L-methionine biosynthesis via de novo pathway; O-succinyl-L-homoserine from L-homoserine: step 1/1. Transfers a succinyl group from succinyl-CoA to L-homoserine, forming succinyl-L-homoserine. The sequence is that of Homoserine O-succinyltransferase from Pelagibacterium halotolerans (strain DSM 22347 / JCM 15775 / CGMCC 1.7692 / B2).